Reading from the N-terminus, the 205-residue chain is GTP cyclohydrolase 1 (205 aa).

3 residues coordinate Zn(2+): cysteine 94, histidine 97, and cysteine 165.

It belongs to the GTP cyclohydrolase I family. Toroid-shaped homodecamer, composed of two pentamers of five dimers.

It catalyses the reaction GTP + H2O = 7,8-dihydroneopterin 3'-triphosphate + formate + H(+). It functions in the pathway cofactor biosynthesis; 7,8-dihydroneopterin triphosphate biosynthesis; 7,8-dihydroneopterin triphosphate from GTP: step 1/1. The polypeptide is GTP cyclohydrolase 1 (Sinorhizobium medicae (strain WSM419) (Ensifer medicae)).